The primary structure comprises 131 residues: Spermatocyte protein spe-27 (131 aa).

An N-terminal signal peptide occupies residues 1 to 17 (MNKSLIFLLSFAYSCYS).

Its function is as follows. Required for spermiogenesis. In Caenorhabditis elegans, this protein is Spermatocyte protein spe-27 (spe-27).